The sequence spans 336 residues: Ornithine carbamoyltransferase, catabolic (336 aa).

Residues 57-60, Gln84, Arg108, and 135-138 each bind carbamoyl phosphate; these read STRT and HPTQ. L-ornithine is bound by residues Asn168, Asp232, and 236-237; that span reads SM. Carbamoyl phosphate is bound by residues 274–275 and Arg321; that span reads CL.

It belongs to the aspartate/ornithine carbamoyltransferase superfamily. OTCase family.

Its subcellular location is the cytoplasm. The enzyme catalyses carbamoyl phosphate + L-ornithine = L-citrulline + phosphate + H(+). Its pathway is amino-acid degradation; L-arginine degradation via ADI pathway; carbamoyl phosphate from L-arginine: step 2/2. Its function is as follows. Reversibly catalyzes the transfer of the carbamoyl group from carbamoyl phosphate (CP) to the N(epsilon) atom of ornithine (ORN) to produce L-citrulline. In Burkholderia pseudomallei (strain K96243), this protein is Ornithine carbamoyltransferase, catabolic.